A 137-amino-acid polypeptide reads, in one-letter code: Large ribosomal subunit protein uL16 (137 aa).

Belongs to the universal ribosomal protein uL16 family. Part of the 50S ribosomal subunit.

Binds 23S rRNA and is also seen to make contacts with the A and possibly P site tRNAs. The protein is Large ribosomal subunit protein uL16 of Halorhodospira halophila (strain DSM 244 / SL1) (Ectothiorhodospira halophila (strain DSM 244 / SL1)).